The primary structure comprises 353 residues: Glutamine synthetase nodule isozyme (353 aa).

The GS beta-grasp domain maps to 19–99 (IIAEYIWVGG…VMCDTYTPAG (81 aa)). The GS catalytic domain occupies 106–353 (KRHAAAKIFS…TSMIAETTLL (248 aa)).

This sequence belongs to the glutamine synthetase family. Homooctamer.

The protein localises to the cytoplasm. It carries out the reaction L-glutamate + NH4(+) + ATP = L-glutamine + ADP + phosphate + H(+). This Lupinus luteus (European yellow lupine) protein is Glutamine synthetase nodule isozyme.